Consider the following 1110-residue polypeptide: Isoleucine--tRNA ligase (1110 aa).

The short motif at 47–57 is the 'HIGH' region element; the sequence is PSANGTPGIHH. Residues 658–662 carry the 'KMSKS' region motif; that stretch reads KMSKR. Lys-661 serves as a coordination point for ATP.

This sequence belongs to the class-I aminoacyl-tRNA synthetase family. IleS type 2 subfamily. In terms of assembly, monomer. It depends on Zn(2+) as a cofactor.

It localises to the cytoplasm. The enzyme catalyses tRNA(Ile) + L-isoleucine + ATP = L-isoleucyl-tRNA(Ile) + AMP + diphosphate. In terms of biological role, catalyzes the attachment of isoleucine to tRNA(Ile). As IleRS can inadvertently accommodate and process structurally similar amino acids such as valine, to avoid such errors it has two additional distinct tRNA(Ile)-dependent editing activities. One activity is designated as 'pretransfer' editing and involves the hydrolysis of activated Val-AMP. The other activity is designated 'posttransfer' editing and involves deacylation of mischarged Val-tRNA(Ile). This is Isoleucine--tRNA ligase from Cytophaga hutchinsonii (strain ATCC 33406 / DSM 1761 / CIP 103989 / NBRC 15051 / NCIMB 9469 / D465).